Here is a 242-residue protein sequence, read N- to C-terminus: 3-deoxy-manno-octulosonate cytidylyltransferase (242 aa).

The protein belongs to the KdsB family.

The protein localises to the cytoplasm. The enzyme catalyses 3-deoxy-alpha-D-manno-oct-2-ulosonate + CTP = CMP-3-deoxy-beta-D-manno-octulosonate + diphosphate. It functions in the pathway nucleotide-sugar biosynthesis; CMP-3-deoxy-D-manno-octulosonate biosynthesis; CMP-3-deoxy-D-manno-octulosonate from 3-deoxy-D-manno-octulosonate and CTP: step 1/1. It participates in bacterial outer membrane biogenesis; lipopolysaccharide biosynthesis. Activates KDO (a required 8-carbon sugar) for incorporation into bacterial lipopolysaccharide in Gram-negative bacteria. This Anaeromyxobacter sp. (strain K) protein is 3-deoxy-manno-octulosonate cytidylyltransferase.